We begin with the raw amino-acid sequence, 643 residues long: Probable extracellular metalloproteinase 4 (643 aa).

Positions 1–18 (MHGLLLAGLLALPLNVLA) are cleaved as a signal peptide. The propeptide occupies 19 to 254 (HPTESHSSGV…VHSVVDYVSA (236 aa)). Basic and acidic residues predominate over residues 47–57 (TKSDAVPKQDG). The interval 47 to 69 (TKSDAVPKQDGESFTTSSTGDDN) is disordered. A compositionally biased stretch (polar residues) spans 58-69 (ESFTTSSTGDDN). N-linked (GlcNAc...) asparagine glycosylation is found at asparagine 271 and asparagine 420. Zn(2+) is bound at residue histidine 437. Glutamate 438 is an active-site residue. Histidine 441 is a binding site for Zn(2+). N-linked (GlcNAc...) asparagine glycans are attached at residues asparagine 603 and asparagine 629.

This sequence belongs to the peptidase M36 family. It depends on Zn(2+) as a cofactor.

Its subcellular location is the secreted. Its function is as follows. Secreted metalloproteinase probably acting as a virulence factor. This chain is Probable extracellular metalloproteinase 4 (MEP4), found in Arthroderma benhamiae (strain ATCC MYA-4681 / CBS 112371) (Trichophyton mentagrophytes).